Consider the following 516-residue polypeptide: Nondiscriminating glutamyl-tRNA synthetase EARS2, mitochondrial (516 aa).

The N-terminal 39 residues, 1-39 (MRPAFIRGKWLSRTLELATGLGRRTCSSRESGREVRVRF), are a transit peptide targeting the mitochondrion. 38-40 (RFA) is an L-glutamate binding site. The 'HIGH' region signature appears at 43 to 51 (PTGFLHLGG). Residue His-48 participates in ATP binding. Residues Glu-74, 226–230 (YHLAN), and Arg-244 contribute to the L-glutamate site. Residues Glu-247 and 282-286 (KLSKR) each bind ATP. The 'KMSKS' region signature appears at 282–286 (KLSKR).

Belongs to the class-I aminoacyl-tRNA synthetase family. Glutamate--tRNA ligase type 1 subfamily.

The protein resides in the mitochondrion matrix. It catalyses the reaction tRNA(Glx) + L-glutamate + ATP = L-glutamyl-tRNA(Glx) + AMP + diphosphate. The catalysed reaction is tRNA(Glu) + L-glutamate + ATP = L-glutamyl-tRNA(Glu) + AMP + diphosphate. The enzyme catalyses tRNA(Gln) + L-glutamate + ATP = L-glutamyl-tRNA(Gln) + AMP + diphosphate. Functionally, non-discriminating glutamyl-tRNA synthetase that catalyzes aminoacylation of both mitochondrial tRNA(Glu) and tRNA(Gln) and participates in RNA aminoacylation for mitochondrial protein translation. Attachs glutamate to tRNA(Glu) or tRNA(Gln) in a two-step reaction: glutamate is first activated by ATP to form Glu-AMP and then transferred to the acceptor end of tRNA(Glu) or tRNA(Gln). The sequence is that of Nondiscriminating glutamyl-tRNA synthetase EARS2, mitochondrial from Xenopus tropicalis (Western clawed frog).